Consider the following 179-residue polypeptide: Large ribosomal subunit protein uL5 (179 aa).

This sequence belongs to the universal ribosomal protein uL5 family. In terms of assembly, part of the 50S ribosomal subunit; part of the 5S rRNA/L5/L18/L25 subcomplex. Contacts the 5S rRNA and the P site tRNA. Forms a bridge to the 30S subunit in the 70S ribosome.

Functionally, this is one of the proteins that bind and probably mediate the attachment of the 5S RNA into the large ribosomal subunit, where it forms part of the central protuberance. In the 70S ribosome it contacts protein S13 of the 30S subunit (bridge B1b), connecting the 2 subunits; this bridge is implicated in subunit movement. Contacts the P site tRNA; the 5S rRNA and some of its associated proteins might help stabilize positioning of ribosome-bound tRNAs. The chain is Large ribosomal subunit protein uL5 from Sodalis glossinidius (strain morsitans).